We begin with the raw amino-acid sequence, 178 residues long: Large ribosomal subunit protein uL10 (178 aa).

It belongs to the universal ribosomal protein uL10 family. As to quaternary structure, part of the ribosomal stalk of the 50S ribosomal subunit. The N-terminus interacts with L11 and the large rRNA to form the base of the stalk. The C-terminus forms an elongated spine to which L12 dimers bind in a sequential fashion forming a multimeric L10(L12)X complex.

Its function is as follows. Forms part of the ribosomal stalk, playing a central role in the interaction of the ribosome with GTP-bound translation factors. The sequence is that of Large ribosomal subunit protein uL10 from Petrotoga mobilis (strain DSM 10674 / SJ95).